The following is a 301-amino-acid chain: N-acetylmuramic acid 6-phosphate etherase (301 aa).

The 164-residue stretch at Ile-57–Lys-220 folds into the SIS domain. The active-site Proton donor is the Glu-85. Glu-116 is an active-site residue.

It belongs to the GCKR-like family. MurNAc-6-P etherase subfamily. As to quaternary structure, homodimer.

The enzyme catalyses N-acetyl-D-muramate 6-phosphate + H2O = N-acetyl-D-glucosamine 6-phosphate + (R)-lactate. It participates in amino-sugar metabolism; 1,6-anhydro-N-acetylmuramate degradation. Its pathway is amino-sugar metabolism; N-acetylmuramate degradation. It functions in the pathway cell wall biogenesis; peptidoglycan recycling. In terms of biological role, specifically catalyzes the cleavage of the D-lactyl ether substituent of MurNAc 6-phosphate, producing GlcNAc 6-phosphate and D-lactate. Together with AnmK, is also required for the utilization of anhydro-N-acetylmuramic acid (anhMurNAc) either imported from the medium or derived from its own cell wall murein, and thus plays a role in cell wall recycling. The protein is N-acetylmuramic acid 6-phosphate etherase of Pasteurella multocida (strain Pm70).